Reading from the N-terminus, the 479-residue chain is Ribosomal RNA small subunit methyltransferase F (479 aa).

S-adenosyl-L-methionine is bound by residues 125–131, glutamate 149, aspartate 176, and aspartate 194; that span reads AAAPGSK. Cysteine 247 (nucleophile) is an active-site residue.

This sequence belongs to the class I-like SAM-binding methyltransferase superfamily. RsmB/NOP family.

The protein resides in the cytoplasm. The catalysed reaction is cytidine(1407) in 16S rRNA + S-adenosyl-L-methionine = 5-methylcytidine(1407) in 16S rRNA + S-adenosyl-L-homocysteine + H(+). Its function is as follows. Specifically methylates the cytosine at position 1407 (m5C1407) of 16S rRNA. This Salmonella typhi protein is Ribosomal RNA small subunit methyltransferase F.